Here is a 349-residue protein sequence, read N- to C-terminus: tRNA N6-adenosine threonylcarbamoyltransferase (349 aa).

The Fe cation site is built by His117 and His121. Substrate is bound by residues 140–144 (LVSGG), Asp173, Gly186, and Asn284. Residue Asp312 participates in Fe cation binding.

It belongs to the KAE1 / TsaD family. The cofactor is Fe(2+).

It is found in the cytoplasm. The enzyme catalyses L-threonylcarbamoyladenylate + adenosine(37) in tRNA = N(6)-L-threonylcarbamoyladenosine(37) in tRNA + AMP + H(+). Functionally, required for the formation of a threonylcarbamoyl group on adenosine at position 37 (t(6)A37) in tRNAs that read codons beginning with adenine. Is involved in the transfer of the threonylcarbamoyl moiety of threonylcarbamoyl-AMP (TC-AMP) to the N6 group of A37, together with TsaE and TsaB. TsaD likely plays a direct catalytic role in this reaction. This chain is tRNA N6-adenosine threonylcarbamoyltransferase, found in Psychrobacter arcticus (strain DSM 17307 / VKM B-2377 / 273-4).